The chain runs to 191 residues: Orotate phosphoribosyltransferase (191 aa).

116–124 serves as a coordination point for 5-phospho-alpha-D-ribose 1-diphosphate; the sequence is EDVVTTGGS. Residues Thr120 and Arg148 each contribute to the orotate site.

The protein belongs to the purine/pyrimidine phosphoribosyltransferase family. PyrE subfamily. Homodimer. It depends on Mg(2+) as a cofactor.

It carries out the reaction orotidine 5'-phosphate + diphosphate = orotate + 5-phospho-alpha-D-ribose 1-diphosphate. It participates in pyrimidine metabolism; UMP biosynthesis via de novo pathway; UMP from orotate: step 1/2. Its function is as follows. Catalyzes the transfer of a ribosyl phosphate group from 5-phosphoribose 1-diphosphate to orotate, leading to the formation of orotidine monophosphate (OMP). The sequence is that of Orotate phosphoribosyltransferase from Heliobacterium modesticaldum (strain ATCC 51547 / Ice1).